A 492-amino-acid polypeptide reads, in one-letter code: Target of Myb1 membrane trafficking protein (492 aa).

Residue M1 is modified to N-acetylmethionine. S11 carries the phosphoserine modification. A VHS domain is found at 20 to 152 (ATDGSLQSED…DLRRKGLEFP (133 aa)). The KRKK motif lies at 48 to 56 (KDAFRAVKK). S160 carries the post-translational modification Phosphoserine. T164 carries the post-translational modification Phosphothreonine. The segment covering 167 to 195 (RTVFNSETPSRQNSVSSNTSQRGDLSQHA) has biased composition (polar residues). The tract at residues 167 to 215 (RTVFNSETPSRQNSVSSNTSQRGDLSQHATPLPTPAVLPGDSPITPTPE) is disordered. Phosphoserine is present on residues S176, S180, and S208. In terms of domain architecture, GAT spans 215-303 (EQIGKLRSEL…VFLRHERFER (89 aa)). Positions 321 to 326 (DLIDMG) are clathrin box. Phosphoserine is present on residues S355 and S376. A Glycyl lysine isopeptide (Lys-Gly) (interchain with G-Cter in SUMO2) cross-link involves residue K385. The interaction with MYO6 stretch occupies residues 392–463 (TDGLAGALDA…ADRLPNLASP (72 aa)). Residues 450 to 492 (RAKAADRLPNLASPSAEGPPRPSPGTAPRRKTQEKDDDMLFAL) form a disordered region. S462 carries the phosphoserine modification.

It belongs to the TOM1 family. As to quaternary structure, found in a complex with TOLLIP; interacts (via GAT domain) with TOLLIP (via N-terminus); the interactions leads to TOM1-recruitment to endosomes and inhibition of TOLLIP binding to PtdIns(3)P. Interacts (via GAT domain and the C-terminal part of the VHS domain) with UBC/ubiquitin. Interacts (via clathrin box and C-terminus) with clathrin heavy chain. Interacts with MYO6. Interacts with TAX1BP1; CALCOCO2/NDP52 and OPTN; the interaction is indirect and is mediated by MYO6, which acts as a bridge between TOM1 and the three autophagy receptors. Interacts (via C-terminus) with ZFYVE16 (via C-terminus); interaction is required to target TOM1 and clathrin to endosomes. Interacts with LRBA. Monoubiquitinated. As to expression, ubiquitous. In adult brain, it is highly expressed at the mesencephalic level, in the hippocampal formation and medial lemniscus. In cerebellum, it is highly expressed in Purkinje cells and granular layers.

It localises to the cytoplasm. It is found in the endosome membrane. Its subcellular location is the early endosome membrane. In terms of biological role, adapter protein that plays a role in the intracellular membrane trafficking of ubiquitinated proteins, thereby participating in autophagy, ubiquitination-dependent signaling and receptor recycling pathways. Acts as a MYO6/Myosin VI adapter protein that targets MYO6 to endocytic structures. Together with MYO6, required for autophagosomal delivery of endocytic cargo, the maturation of autophagosomes and their fusion with lysosomes. MYO6 links TOM1 with autophagy receptors, such as TAX1BP1; CALCOCO2/NDP52 and OPTN. Binds to polyubiquitinated proteins via its GAT domain. In a complex with TOLLIP, recruits ubiquitin-conjugated proteins onto early endosomes. The Tom1-Tollip complex may regulate endosomal trafficking by linking polyubiquitinated proteins to clathrin. Mediates clathrin recruitment to early endosomes by ZFYVE16. Modulates binding of TOLLIP to phosphatidylinositol 3-phosphate (PtdIns(3)P) via binding competition; the association with TOLLIP may favor the release of TOLLIP from endosomal membranes, allowing TOLLIP to commit to cargo trafficking. Acts as a phosphatidylinositol 5-phosphate (PtdIns(5)P) effector by binding to PtdIns(5)P, thereby regulating endosomal maturation. PtdIns(5)P-dependent recruitment to signaling endosomes may block endosomal maturation. Also inhibits Toll-like receptor (TLR) signaling and participates in immune receptor recycling. This Mus musculus (Mouse) protein is Target of Myb1 membrane trafficking protein.